The sequence spans 142 residues: Large ribosomal subunit protein uL13c (142 aa).

Belongs to the universal ribosomal protein uL13 family. As to quaternary structure, part of the 50S ribosomal subunit.

It is found in the plastid. The protein resides in the chloroplast. The chain is Large ribosomal subunit protein uL13c from Pyropia yezoensis (Susabi-nori).